An 89-amino-acid polypeptide reads, in one-letter code: Small ribosomal subunit protein uS15 (89 aa).

The protein belongs to the universal ribosomal protein uS15 family. In terms of assembly, part of the 30S ribosomal subunit. Forms a bridge to the 50S subunit in the 70S ribosome, contacting the 23S rRNA.

Functionally, one of the primary rRNA binding proteins, it binds directly to 16S rRNA where it helps nucleate assembly of the platform of the 30S subunit by binding and bridging several RNA helices of the 16S rRNA. Forms an intersubunit bridge (bridge B4) with the 23S rRNA of the 50S subunit in the ribosome. The sequence is that of Small ribosomal subunit protein uS15 from Marinobacter nauticus (strain ATCC 700491 / DSM 11845 / VT8) (Marinobacter aquaeolei).